A 379-amino-acid chain; its full sequence is Glucose-1-phosphate adenylyltransferase (379 aa).

Alpha-D-glucose 1-phosphate is bound by residues G164, E179 to K180, and S190.

Belongs to the bacterial/plant glucose-1-phosphate adenylyltransferase family. Homotetramer.

It carries out the reaction alpha-D-glucose 1-phosphate + ATP + H(+) = ADP-alpha-D-glucose + diphosphate. It functions in the pathway glycan biosynthesis; glycogen biosynthesis. Involved in the biosynthesis of ADP-glucose, a building block required for the elongation reactions to produce glycogen. Catalyzes the reaction between ATP and alpha-D-glucose 1-phosphate (G1P) to produce pyrophosphate and ADP-Glc. In Streptococcus equi subsp. zooepidemicus (strain H70), this protein is Glucose-1-phosphate adenylyltransferase.